An 819-amino-acid polypeptide reads, in one-letter code: Lon protease (819 aa).

Positions 1–14 are enriched in polar residues; that stretch reads MNSTNNTDSQNLDP. The tract at residues 1–41 is disordered; it reads MNSTNNTDSQNLDPNASEVEKLLDESAEAEEKTDDHTPPSE. A compositionally biased stretch (basic and acidic residues) spans 18–38; that stretch reads EVEKLLDESAEAEEKTDDHTP. A Lon N-terminal domain is found at 42 to 239; sequence LFILPLNKRP…KALVLLKKEL (198 aa). Residue 392-399 coordinates ATP; the sequence is GPPGVGKT. Positions 634 to 818 constitute a Lon proteolytic domain; it reads KTPVGVATGL…DDVFKIAFPG (185 aa). Catalysis depends on residues serine 724 and lysine 767.

It belongs to the peptidase S16 family. In terms of assembly, homohexamer. Organized in a ring with a central cavity.

It is found in the cytoplasm. It catalyses the reaction Hydrolysis of proteins in presence of ATP.. Its function is as follows. ATP-dependent serine protease that mediates the selective degradation of mutant and abnormal proteins as well as certain short-lived regulatory proteins. Required for cellular homeostasis and for survival from DNA damage and developmental changes induced by stress. Degrades polypeptides processively to yield small peptide fragments that are 5 to 10 amino acids long. Binds to DNA in a double-stranded, site-specific manner. This Chlamydia muridarum (strain MoPn / Nigg) protein is Lon protease.